A 382-amino-acid polypeptide reads, in one-letter code: D-galactonate dehydratase (382 aa).

Asp-183 is a Mg(2+) binding site. His-185 serves as the catalytic Proton donor. Mg(2+) is bound by residues Glu-209 and Glu-235. The active-site Proton acceptor is the His-285. Residues 361 to 382 (NENPPDWRNPVWRHSDGSIAEW) form a disordered region.

Belongs to the mandelate racemase/muconate lactonizing enzyme family. GalD subfamily. Mg(2+) is required as a cofactor.

It catalyses the reaction D-galactonate = 2-dehydro-3-deoxy-D-galactonate + H2O. The protein operates within carbohydrate acid metabolism; D-galactonate degradation; D-glyceraldehyde 3-phosphate and pyruvate from D-galactonate: step 1/3. In terms of biological role, catalyzes the dehydration of D-galactonate to 2-keto-3-deoxy-D-galactonate. The chain is D-galactonate dehydratase from Xanthomonas euvesicatoria pv. vesicatoria (strain 85-10) (Xanthomonas campestris pv. vesicatoria).